The sequence spans 619 residues: Serine/threonine-protein kinase pkn1 (619 aa).

Residues 15-302 (YRILYRKGQS…SSQNLPQAVL (288 aa)) form the Protein kinase domain. An ATP-binding site is contributed by 21–29 (KGQSLWSED). The active-site Proton acceptor is Glu141.

The protein belongs to the protein kinase superfamily. Ser/Thr protein kinase family. Autophosphorylated on serine and threonine residues.

The enzyme catalyses L-seryl-[protein] + ATP = O-phospho-L-seryl-[protein] + ADP + H(+). It catalyses the reaction L-threonyl-[protein] + ATP = O-phospho-L-threonyl-[protein] + ADP + H(+). Together with the serine/threonine kinase PknD, may play a role in the specific interactions with host proteins during intracellular growth. This Chlamydia pneumoniae (Chlamydophila pneumoniae) protein is Serine/threonine-protein kinase pkn1 (pkn1).